The sequence spans 131 residues: Large ribosomal subunit protein bL19 (131 aa).

This sequence belongs to the bacterial ribosomal protein bL19 family.

Its function is as follows. This protein is located at the 30S-50S ribosomal subunit interface and may play a role in the structure and function of the aminoacyl-tRNA binding site. The sequence is that of Large ribosomal subunit protein bL19 from Rhodopseudomonas palustris (strain HaA2).